The following is a 931-amino-acid chain: G patch domain-containing protein 1 (931 aa).

A compositionally biased stretch (acidic residues) spans 1–12; it reads MAALDSDSDEDL. Disordered stretches follow at residues 1–41, 72–92, and 169–213; these read MAAL…TVRD, TPSS…LGPE, and QGIG…YLPE. Residue alanine 2 is modified to N-acetylalanine. Phosphoserine occurs at positions 6 and 8. Over residues 72-81 the composition is skewed to polar residues; that stretch reads TPSSFVSSRQ. Residues 152–198 enclose the G-patch domain; it reads KLSVGFELLRKMGWKEGQGIGPRVKRRPRRQKPDPGVKIYGCALPPG. Over residues 202-211 the composition is skewed to acidic residues; sequence GSEDEDDDYL. Lysine 313 participates in a covalent cross-link: Glycyl lysine isopeptide (Lys-Gly) (interchain with G-Cter in SUMO2). Serine 358 and serine 479 each carry phosphoserine. 2 disordered regions span residues 567-594 and 659-931; these read SRFT…VSDK and SPVT…LRRQ. Basic and acidic residues predominate over residues 582–593; it reads EVPRDQENDVSD. The span at 659-668 shows a compositional bias: polar residues; it reads SPVTQASSEK. Over residues 669-695 the composition is skewed to basic and acidic residues; that stretch reads VAQHRASDKSRKPSRWDTSKEEKKEDS. Phosphoserine is present on serine 715. Acidic residues predominate over residues 769 to 780; sequence SEDEQGDSEDDQ. Basic and acidic residues predominate over residues 781–792; that stretch reads EGTREADFKSSQ. The segment covering 852 to 888 has biased composition (basic residues); it reads EKHKKNKEKHKTKKEHRRKKEKKKKHRKHKHKGKQKN. The span at 896–905 shows a compositional bias: low complexity; that stretch reads SSESTDSSDS. Residues 922-931 are compositionally biased toward basic residues; the sequence is RLKRLPLRRQ.

It belongs to the GPATCH1 family.

The polypeptide is G patch domain-containing protein 1 (GPATCH1) (Bos taurus (Bovine)).